The following is a 634-amino-acid chain: Chaperone protein HtpG (634 aa).

The a; substrate-binding stretch occupies residues 1–344 (MSETVSHNKE…SNDLPLNVSR (344 aa)). Positions 345 to 561 (EILQDNKVTQ…DFEMGTQMAK (217 aa)) are b. Residues 562 to 634 (LLEAAGQAVP…GAINKLLTKV (73 aa)) form a c region.

The protein belongs to the heat shock protein 90 family. As to quaternary structure, homodimer.

The protein localises to the cytoplasm. Molecular chaperone. Has ATPase activity. This is Chaperone protein HtpG from Vibrio campbellii (strain ATCC BAA-1116).